A 171-amino-acid chain; its full sequence is NADH-quinone oxidoreductase subunit B (171 aa).

The [4Fe-4S] cluster site is built by Cys34, Cys35, Cys99, and Cys128.

Belongs to the complex I 20 kDa subunit family. In terms of assembly, NDH-1 is composed of 14 different subunits. Subunits NuoB, C, D, E, F, and G constitute the peripheral sector of the complex. [4Fe-4S] cluster is required as a cofactor.

The protein resides in the cell inner membrane. It catalyses the reaction a quinone + NADH + 5 H(+)(in) = a quinol + NAD(+) + 4 H(+)(out). In terms of biological role, NDH-1 shuttles electrons from NADH, via FMN and iron-sulfur (Fe-S) centers, to quinones in the respiratory chain. The immediate electron acceptor for the enzyme in this species is believed to be ubiquinone. Couples the redox reaction to proton translocation (for every two electrons transferred, four hydrogen ions are translocated across the cytoplasmic membrane), and thus conserves the redox energy in a proton gradient. The chain is NADH-quinone oxidoreductase subunit B from Sulfurihydrogenibium sp. (strain YO3AOP1).